Consider the following 398-residue polypeptide: Diaminopropionate ammonia-lyase (398 aa).

Lys77 carries the post-translational modification N6-(pyridoxal phosphate)lysine.

This sequence belongs to the diaminopropionate ammonia-lyase family. Homodimer. Requires pyridoxal 5'-phosphate as cofactor.

It catalyses the reaction (S)-2,3-diaminopropanoate + H2O + H(+) = pyruvate + 2 NH4(+). The enzyme catalyses (R)-2,3-diaminopropanoate + H2O + H(+) = pyruvate + 2 NH4(+). Catalyzes the alpha,beta-elimination reaction of both L- and D-alpha,beta-diaminopropionate (DAP) to form pyruvate and ammonia. The D-isomer of serine is degraded to pyruvate, though very poorly; other amino acids (L-serine, D- and L-threonine, D- and L-beta-Cl-alanine) are not substrates. This chain is Diaminopropionate ammonia-lyase (ygeX), found in Escherichia coli O157:H7.